The chain runs to 446 residues: Probable carboxylesterase 16 (446 aa).

The interval 84 to 131 is disordered; it reads PEPDSLRHKDNYNHQPRSDRRHSYGPNHNSPAPAERNESRRNSYGCNN. The segment covering 87–105 has biased composition (basic and acidic residues); the sequence is DSLRHKDNYNHQPRSDRRH. Residues 158–160 carry the Involved in the stabilization of the negatively charged intermediate by the formation of the oxyanion hole motif; sequence HGG. Active-site residues include Ser274, Asp378, and His408.

It belongs to the 'GDXG' lipolytic enzyme family. In terms of tissue distribution, expressed in roots, leaves, stems, flowers and siliques.

The enzyme catalyses a carboxylic ester + H2O = an alcohol + a carboxylate + H(+). Functionally, carboxylesterase acting on esters with varying acyl chain length. This is Probable carboxylesterase 16 (CXE16) from Arabidopsis thaliana (Mouse-ear cress).